The chain runs to 399 residues: Coenzyme A biosynthesis bifunctional protein CoaBC (399 aa).

The interval methionine 1–serine 190 is phosphopantothenoylcysteine decarboxylase. Residue cysteine 159 is the Proton donor of the active site. The segment at isoleucine 191 to methionine 399 is phosphopantothenate--cysteine ligase. CTP contacts are provided by residues aspartate 279, lysine 289, proline 307–valine 310, phenylalanine 326, lysine 340, and lysine 344.

This sequence in the N-terminal section; belongs to the HFCD (homo-oligomeric flavin containing Cys decarboxylase) superfamily. In the C-terminal section; belongs to the PPC synthetase family. The cofactor is Mg(2+). Requires FMN as cofactor.

It carries out the reaction N-[(R)-4-phosphopantothenoyl]-L-cysteine + H(+) = (R)-4'-phosphopantetheine + CO2. The catalysed reaction is (R)-4'-phosphopantothenate + L-cysteine + CTP = N-[(R)-4-phosphopantothenoyl]-L-cysteine + CMP + diphosphate + H(+). Its pathway is cofactor biosynthesis; coenzyme A biosynthesis; CoA from (R)-pantothenate: step 2/5. It functions in the pathway cofactor biosynthesis; coenzyme A biosynthesis; CoA from (R)-pantothenate: step 3/5. Catalyzes two sequential steps in the biosynthesis of coenzyme A. In the first step cysteine is conjugated to 4'-phosphopantothenate to form 4-phosphopantothenoylcysteine. In the second step the latter compound is decarboxylated to form 4'-phosphopantotheine. The chain is Coenzyme A biosynthesis bifunctional protein CoaBC from Vibrio parahaemolyticus serotype O3:K6 (strain RIMD 2210633).